Reading from the N-terminus, the 541-residue chain is Arginine--tRNA ligase (541 aa).

A 'HIGH' region motif is present at residues 119 to 129 (ANPTGPLHIGH).

This sequence belongs to the class-I aminoacyl-tRNA synthetase family. Monomer.

The protein resides in the cytoplasm. It carries out the reaction tRNA(Arg) + L-arginine + ATP = L-arginyl-tRNA(Arg) + AMP + diphosphate. The sequence is that of Arginine--tRNA ligase from Helicobacter pylori (strain Shi470).